The primary structure comprises 264 residues: 3-methyl-2-oxobutanoate hydroxymethyltransferase 2 (264 aa).

Residues Asp-44 and Asp-83 each contribute to the Mg(2+) site. 3-methyl-2-oxobutanoate contacts are provided by residues 44–45, Asp-83, and Lys-111; that span reads DS. Glu-113 is a Mg(2+) binding site. Catalysis depends on Glu-180, which acts as the Proton acceptor.

This sequence belongs to the PanB family. Homodecamer; pentamer of dimers. It depends on Mg(2+) as a cofactor.

Its subcellular location is the cytoplasm. It catalyses the reaction 3-methyl-2-oxobutanoate + (6R)-5,10-methylene-5,6,7,8-tetrahydrofolate + H2O = 2-dehydropantoate + (6S)-5,6,7,8-tetrahydrofolate. It functions in the pathway cofactor biosynthesis; (R)-pantothenate biosynthesis; (R)-pantoate from 3-methyl-2-oxobutanoate: step 1/2. Functionally, catalyzes the reversible reaction in which hydroxymethyl group from 5,10-methylenetetrahydrofolate is transferred onto alpha-ketoisovalerate to form ketopantoate. In Hahella chejuensis (strain KCTC 2396), this protein is 3-methyl-2-oxobutanoate hydroxymethyltransferase 2.